Reading from the N-terminus, the 801-residue chain is Ent-copalyl diphosphate synthase, chloroplastic (801 aa).

K241 contributes to the substrate binding site. Mg(2+) is bound by residues D373 and D375. The short motif at 373 to 376 is the DXDD motif element; that stretch reads DIDD. Position 459 (K459) interacts with substrate.

Belongs to the terpene synthase family. It depends on Mg(2+) as a cofactor.

It is found in the plastid. Its subcellular location is the chloroplast. It carries out the reaction (2E,6E,10E)-geranylgeranyl diphosphate = ent-copalyl diphosphate. It functions in the pathway plant hormone biosynthesis; gibberellin biosynthesis. In terms of biological role, catalyzes the conversion of geranylgeranyl diphosphate to the gibberellin precursor ent-copalyl diphosphate. This Pisum sativum (Garden pea) protein is Ent-copalyl diphosphate synthase, chloroplastic.